The primary structure comprises 504 residues: GTPase Obg (504 aa).

The Obg domain occupies Ser-2–Met-159. The segment at Ala-68–Thr-88 is disordered. The OBG-type G domain occupies Ala-160–Arg-340. Residues Gly-166–Ser-173, Phe-191–Ala-195, Asp-212–Gly-215, Asn-292–Asp-295, and Ser-321–Val-323 each bind GTP. 2 residues coordinate Mg(2+): Ser-173 and Thr-193. The OCT domain maps to Lys-364–Pro-444. Residues Gly-449–Ala-481 are disordered. Residues Arg-458–Lys-476 are compositionally biased toward basic and acidic residues.

Belongs to the TRAFAC class OBG-HflX-like GTPase superfamily. OBG GTPase family. As to quaternary structure, monomer. Mg(2+) is required as a cofactor.

The protein localises to the cytoplasm. In terms of biological role, an essential GTPase which binds GTP, GDP and possibly (p)ppGpp with moderate affinity, with high nucleotide exchange rates and a fairly low GTP hydrolysis rate. Plays a role in control of the cell cycle, stress response, ribosome biogenesis and in those bacteria that undergo differentiation, in morphogenesis control. This chain is GTPase Obg, found in Corynebacterium urealyticum (strain ATCC 43042 / DSM 7109).